Here is a 269-residue protein sequence, read N- to C-terminus: Eukaryotic translation initiation factor 3 subunit G-2 (269 aa).

In terms of domain architecture, RRM spans serine 189–proline 267.

It belongs to the eIF-3 subunit G family. As to quaternary structure, component of the eukaryotic translation initiation factor 3 (eIF-3) complex. The eIF-3 complex interacts with pix.

The protein localises to the cytoplasm. In terms of biological role, RNA-binding component of the eukaryotic translation initiation factor 3 (eIF-3) complex, which is involved in protein synthesis of a specialized repertoire of mRNAs and, together with other initiation factors, stimulates binding of mRNA and methionyl-tRNAi to the 40S ribosome. The eIF-3 complex specifically targets and initiates translation of a subset of mRNAs involved in cell proliferation. This subunit can bind 18S rRNA. This Drosophila ananassae (Fruit fly) protein is Eukaryotic translation initiation factor 3 subunit G-2.